We begin with the raw amino-acid sequence, 184 residues long: Probable RNA 2'-phosphotransferase (184 aa).

Belongs to the KptA/TPT1 family.

Removes the 2'-phosphate from RNA via an intermediate in which the phosphate is ADP-ribosylated by NAD followed by a presumed transesterification to release the RNA and generate ADP-ribose 1''-2''-cyclic phosphate (APPR&gt;P). May function as an ADP-ribosylase. This Escherichia coli O6:K15:H31 (strain 536 / UPEC) protein is Probable RNA 2'-phosphotransferase.